An 865-amino-acid polypeptide reads, in one-letter code: Prominin-1 (865 aa).

The signal sequence occupies residues 1–19 (MALVLGSLLLLGLCGNSFS). Topologically, residues 20-108 (GGQPSSTDAP…GLKIVYYEAG (89 aa)) are extracellular. A helical membrane pass occupies residues 109 to 129 (IILCCVLGLLFIILMPLVGYF). At 130 to 157 (FCMCRCCNKCGGEMHQRQKENGPFLRKC) the chain is on the cytoplasmic side. Residues 158-178 (FAISLLVICIIISIGIFYGFV) form a helical membrane-spanning segment. The Extracellular portion of the chain corresponds to 179–433 (ANHQVRTRIK…LPTLEEYDSY (255 aa)). N-linked (GlcNAc...) asparagine glycosylation is present at N220. K225, K257, and K264 each carry N6-acetyllysine. N-linked (GlcNAc...) asparagine glycans are attached at residues N274, N395, and N414. Residues 434–454 (WWLGGLVICSLLTLIVIFYYL) traverse the membrane as a helical segment. Residues 455 to 486 (GLLCGVCGYDRHATPTTRGCVSNTGGVFLMVG) are Cytoplasmic-facing. Residues 487 to 507 (VGLSFLFCWILMIIVVLTFVF) form a helical membrane-spanning segment. At 508-792 (GANVEKLICE…LCSYIIDPLN (285 aa)) the chain is on the extracellular side. 4 N-linked (GlcNAc...) asparagine glycosylation sites follow: N548, N580, N729, and N730. A helical transmembrane segment spans residues 793–813 (LFWFGIGKATVFLLPALIFAV). Over 814–865 (KLAKYYRRMDSEDVYDDVETIPMKNMENGNNGYHKDHVYGIHNPVMTSPSQH) the chain is Cytoplasmic. Residue S863 is modified to Phosphoserine.

This sequence belongs to the prominin family. As to quaternary structure, interacts with CDHR1 and with actin filaments. Interacts with NAT8 and NAT8B. Isoform 1 and isoform 2 are glycosylated. In terms of processing, acetylation at Lys-225, Lys-257 and Lys-264 by NAT8 and NAT8B may control PROM1 protein expression and its function in cell apoptosis. As to expression, isoform 1 is selectively expressed on CD34 hematopoietic stem and progenitor cells in adult and fetal bone marrow, fetal liver, cord blood and adult peripheral blood. Isoform 1 is not detected on other blood cells. Isoform 1 is also expressed in a number of non-lymphoid tissues including retina, pancreas, placenta, kidney, liver, lung, brain and heart. Found in saliva within small membrane particles. Isoform 2 is predominantly expressed in fetal liver, skeletal muscle, kidney, and heart as well as adult pancreas, kidney, liver, lung, and placenta. Isoform 2 is highly expressed in fetal liver, low in bone marrow, and barely detectable in peripheral blood. Isoform 2 is expressed on hematopoietic stem cells and in epidermal basal cells (at protein level). Expressed in adult retina by rod and cone photoreceptor cells (at protein level).

The protein resides in the apical cell membrane. Its subcellular location is the cell projection. The protein localises to the microvillus membrane. It is found in the cilium. It localises to the photoreceptor outer segment. The protein resides in the endoplasmic reticulum. Its subcellular location is the endoplasmic reticulum-Golgi intermediate compartment. Functionally, may play a role in cell differentiation, proliferation and apoptosis. Binds cholesterol in cholesterol-containing plasma membrane microdomains and may play a role in the organization of the apical plasma membrane in epithelial cells. During early retinal development acts as a key regulator of disk morphogenesis. Involved in regulation of MAPK and Akt signaling pathways. In neuroblastoma cells suppresses cell differentiation such as neurite outgrowth in a RET-dependent manner. The polypeptide is Prominin-1 (PROM1) (Homo sapiens (Human)).